The sequence spans 99 residues: Aspartyl/glutamyl-tRNA(Asn/Gln) amidotransferase subunit C (99 aa).

It belongs to the GatC family. As to quaternary structure, heterotrimer of A, B and C subunits.

The catalysed reaction is L-glutamyl-tRNA(Gln) + L-glutamine + ATP + H2O = L-glutaminyl-tRNA(Gln) + L-glutamate + ADP + phosphate + H(+). It carries out the reaction L-aspartyl-tRNA(Asn) + L-glutamine + ATP + H2O = L-asparaginyl-tRNA(Asn) + L-glutamate + ADP + phosphate + 2 H(+). Its function is as follows. Allows the formation of correctly charged Asn-tRNA(Asn) or Gln-tRNA(Gln) through the transamidation of misacylated Asp-tRNA(Asn) or Glu-tRNA(Gln) in organisms which lack either or both of asparaginyl-tRNA or glutaminyl-tRNA synthetases. The reaction takes place in the presence of glutamine and ATP through an activated phospho-Asp-tRNA(Asn) or phospho-Glu-tRNA(Gln). The polypeptide is Aspartyl/glutamyl-tRNA(Asn/Gln) amidotransferase subunit C (Sulfurihydrogenibium sp. (strain YO3AOP1)).